The primary structure comprises 1460 residues: Cilia- and flagella-associated protein 43 (1460 aa).

9 WD repeats span residues 46-87 (EGRY…HLQC), 91-132 (VATV…RLVK), 184-221 (SKGH…MKNY), 303-342 (RRRS…AGHT), 428-468 (IFAC…DSAS), 529-569 (MRDH…MKLP), 589-628 (FGRG…IHYS), 911-951 (EIDP…VTEV), and 1129-1170 (NRRF…CRAV). 2 coiled-coil regions span residues 1170–1214 (VVEA…AEEA) and 1399–1446 (LGEH…LREA).

It belongs to the CFAP43 family.

The protein localises to the cell projection. Its subcellular location is the cilium. It localises to the flagellum. It is found in the cytoplasm. The protein resides in the cytoskeleton. The protein localises to the flagellum axoneme. Flagellar protein involved in flagellum axoneme organization and function. In Trypanosoma brucei brucei (strain 927/4 GUTat10.1), this protein is Cilia- and flagella-associated protein 43.